We begin with the raw amino-acid sequence, 522 residues long: 2-isopropylmalate synthase (522 aa).

The Pyruvate carboxyltransferase domain maps to 5 to 267; it reads VIIFDTTLRD…ETGINAKEIH (263 aa). 4 residues coordinate Mn(2+): Asp14, His202, His204, and Asn238. Positions 392-522 are regulatory domain; it reads QLQQLVVQSD…MHKNRELGGV (131 aa).

The protein belongs to the alpha-IPM synthase/homocitrate synthase family. LeuA type 1 subfamily. Homodimer. It depends on Mn(2+) as a cofactor.

It is found in the cytoplasm. It catalyses the reaction 3-methyl-2-oxobutanoate + acetyl-CoA + H2O = (2S)-2-isopropylmalate + CoA + H(+). It participates in amino-acid biosynthesis; L-leucine biosynthesis; L-leucine from 3-methyl-2-oxobutanoate: step 1/4. In terms of biological role, catalyzes the condensation of the acetyl group of acetyl-CoA with 3-methyl-2-oxobutanoate (2-ketoisovalerate) to form 3-carboxy-3-hydroxy-4-methylpentanoate (2-isopropylmalate). This chain is 2-isopropylmalate synthase, found in Shewanella sp. (strain MR-7).